Consider the following 734-residue polypeptide: Paralemmin-3 (734 aa).

A coiled-coil region spans residues 19 to 64 (SALYRQRLEVIAEKRRLQEEIGAARRELEEEKLRVERLKRKSLRER). Disordered regions lie at residues 62–100 (RERW…RNLE) and 114–217 (QSAS…LGVS). Positions 73 to 82 (GPERPEEPAS) are enriched in basic and acidic residues. The stretch at 90–116 (GQAQARIRNLEDSLFSLQSQLQLLQSA) forms a coiled coil. 5 positions are modified to phosphoserine: Ser139, Ser158, Ser167, Ser170, and Ser172. Residues 186–198 (RPSTEAIGTSSEA) show a composition bias toward polar residues. A Phosphoserine modification is found at Ser270. Positions 297–308 (DVTGESGRDAEA) are enriched in basic and acidic residues. 3 disordered regions span residues 297 to 347 (DVTG…PGVE), 374 to 400 (PQGA…SWEV), and 413 to 709 (EKGR…YAPA). At Thr311 the chain carries Phosphothreonine. A compositionally biased stretch (basic and acidic residues) spans 315-336 (RLQEQFEAETCRKEEGASRDSL). Phosphoserine occurs at positions 332 and 335. 8 stretches are compositionally biased toward basic and acidic residues: residues 413 to 427 (EKGR…REDG), 435 to 452 (TQGR…KDSE), 462 to 484 (DEEK…KGGE), 494 to 531 (LVTE…ESKT), 540 to 561 (IGDK…EKTG), 571 to 582 (EGSKKLLDREAD), 589 to 607 (EVDK…EQGK), and 630 to 647 (DEPR…KQEG). At Ser451 the chain carries Phosphoserine. Position 601 is a phosphoserine (Ser601). Ser721 carries the phosphoserine modification. S-palmitoyl cysteine attachment occurs at residues Cys728 and Cys730. Cys731 bears the Cysteine methyl ester mark. Cys731 carries the S-farnesyl cysteine lipid modification. Positions 732-734 (VVM) are cleaved as a propeptide — removed in mature form.

It belongs to the paralemmin family. In terms of assembly, interacts with SIGIRR. In terms of processing, palmitoylated on Cys-728 and Cys-730 and prenylated on Cys-731; which is required for membrane association.

Its subcellular location is the cytoplasm. It is found in the cell membrane. In terms of biological role, ATP-binding protein, which may act as a adapter in the Toll-like receptor (TLR) signaling. The chain is Paralemmin-3 (Palm3) from Mus musculus (Mouse).